A 354-amino-acid polypeptide reads, in one-letter code: Homoserine O-succinyltransferase (354 aa).

Cysteine 146 acts as the Acyl-thioester intermediate in catalysis. Substrate-binding residues include lysine 167 and serine 196. Catalysis depends on histidine 239, which acts as the Proton acceptor. The active site involves glutamate 241. Arginine 253 provides a ligand contact to substrate.

This sequence belongs to the MetA family.

The protein localises to the cytoplasm. The catalysed reaction is L-homoserine + succinyl-CoA = O-succinyl-L-homoserine + CoA. It participates in amino-acid biosynthesis; L-methionine biosynthesis via de novo pathway; O-succinyl-L-homoserine from L-homoserine: step 1/1. Transfers a succinyl group from succinyl-CoA to L-homoserine, forming succinyl-L-homoserine. In Methylobacter tundripaludum (strain ATCC BAA-1195 / DSM 17260 / SV96), this protein is Homoserine O-succinyltransferase.